The sequence spans 112 residues: MAGKTVTRADLAESVFRKVGLSRTESAELVETVIDEICNAIVRGEMVKLSSFATFQVRAKNERIGRNPKTGEEVPISPRKVMTFKASNVLKQRILRSHLARKAKQKPANPAA.

It belongs to the bacterial histone-like protein family. In terms of assembly, heterodimer of an alpha and a beta chain.

In terms of biological role, this protein is one of the two subunits of integration host factor, a specific DNA-binding protein that functions in genetic recombination as well as in transcriptional and translational control. This chain is Integration host factor subunit alpha, found in Allorhizobium ampelinum (strain ATCC BAA-846 / DSM 112012 / S4) (Agrobacterium vitis (strain S4)).